We begin with the raw amino-acid sequence, 570 residues long: Periplasmic trehalase (570 aa).

Residues 1-34 (MIPPEIRRSVLLQKAIKLALAGTLLTFASFSATA) form the signal peptide. Substrate-binding positions include R159, 166 to 167 (WD), N203, 212 to 214 (RSQ), 284 to 286 (RPE), and G317. Catalysis depends on proton donor/acceptor residues D319 and E503. E518 provides a ligand contact to substrate. Positions 545–570 (PCDSVPSTRPASLSATPTKTPSAATQ) are disordered. Over residues 554–570 (PASLSATPTKTPSAATQ) the composition is skewed to low complexity.

Belongs to the glycosyl hydrolase 37 family. Monomer.

It is found in the periplasm. The enzyme catalyses alpha,alpha-trehalose + H2O = alpha-D-glucose + beta-D-glucose. Its function is as follows. Provides the cells with the ability to utilize trehalose at high osmolarity by splitting it into glucose molecules that can subsequently be taken up by the phosphotransferase-mediated uptake system. The protein is Periplasmic trehalase of Salmonella agona (strain SL483).